The sequence spans 401 residues: MQVSIACTEHNLKSRNGEDRLLSKQSSNAPNVVNAARAKFRTVAIIARSLGTFTPQHHISLKESTAKQTGMKYRNLGKSGLRVSCLGLGTWVTFGGQISDEVAERLMTIAYESGVNLFDTAEVYAAGKAEVILGSIIKKKGWRRSSLVITTKLYWGGKAETERGLSRKHIIEGLKGSLQRLQLEYVDVVFANRPDSNTPMEEIVRAMTHVINQGMAMYWGTSRWSAMEIMEAYSVARQFNMIPPVCEQAEYHLFQREKVEVQLPELYHKIGVGAMTWSPLACGIISGKYGNGVPESSRASLKCYQWLKERIVSEEGRKQQNKLKDLSPIAERLGCTLPQLAVAWCLRNEGVSSVLLGSSTPEQLIENLGAIQVLPKMTSHVVNEIDNILRNKPYSKKDYRS.

Thr90, Trp91, Gln97, and Asp119 together coordinate NADP(+). The Proton donor/acceptor role is filled by Tyr124. 17 residues coordinate NADP(+): Asn192, Ser222, Arg223, Gln248, Trp277, Ser278, Pro279, Leu280, Ala281, Cys282, Lys288, Arg298, Gly357, Ser359, Gln363, Glu366, and Asn367.

Belongs to the shaker potassium channel beta subunit family. As to quaternary structure, homotetramer. Interaction with tetrameric potassium channel alpha subunits gives rise to a heterooctamer. Identified in potassium channel complexes containing KCNA1, KCNA2, KCNA4, KCNA5, KCNA6, KCNAB1 and KCNAB2. Part of a complex containing KCNA1, KCNA4 and LGI1; interaction with LGI1 inhibits down-regulation of KCNA1 channel activity. Interacts with the dimer formed by GNB1 and GNG2; this enhances KCNA1 binding. Interacts with SQSTM. As to expression, detected in brain, in hippocampus and striatum (at protein level). Predominantly expressed in brain. No expression found in heart, skeletal muscle or kidney. In the late embryonic and early neonatal brain, highly expressed in hippocampus, cerebral cortex, caudate putamen, colliculus and cerebellum.

It localises to the cytoplasm. Its subcellular location is the membrane. The protein resides in the cell membrane. It catalyses the reaction a primary alcohol + NADP(+) = an aldehyde + NADPH + H(+). The enzyme catalyses a secondary alcohol + NADP(+) = a ketone + NADPH + H(+). Functionally, regulatory subunit of the voltage-gated potassium (Kv) Shaker channels composed of pore-forming and potassium-conducting alpha subunits and of regulatory beta subunits. The beta-1/KCNAB1 cytoplasmic subunit mediates closure of delayed rectifier potassium channels by physically obstructing the pore via its N-terminal domain and increases the speed of channel closure for other family members. Promotes the inactivation of KCNA1, KCNA2, KCNA4, KCNA5 and KCNA6 alpha subunit-containing channels. Displays nicotinamide adenine dinucleotide phosphate (NADPH)-dependent aldoketoreductase activity by catalyzing the NADPH-dependent reduction of a variety of endogenous aldehydes and ketones. The binding of NADPH is required for efficient down-regulation of potassium channel activity. Oxidation of the bound NADPH restrains N-terminal domain from blocking the channel, thereby decreasing N-type inactivation of potassium channel activity. This Mus musculus (Mouse) protein is Voltage-gated potassium channel subunit beta-1.